The chain runs to 101 residues: ATP-dependent Clp protease adapter protein ClpS 1 (101 aa).

This sequence belongs to the ClpS family. As to quaternary structure, binds to the N-terminal domain of the chaperone ClpA.

In terms of biological role, involved in the modulation of the specificity of the ClpAP-mediated ATP-dependent protein degradation. This chain is ATP-dependent Clp protease adapter protein ClpS 1, found in Bradyrhizobium diazoefficiens (strain JCM 10833 / BCRC 13528 / IAM 13628 / NBRC 14792 / USDA 110).